A 360-amino-acid polypeptide reads, in one-letter code: UDP-N-acetylglucosamine--N-acetylmuramyl-(pentapeptide) pyrophosphoryl-undecaprenol N-acetylglucosamine transferase (360 aa).

Residues Ser198 and Gln289 each contribute to the UDP-N-acetyl-alpha-D-glucosamine site.

The protein belongs to the glycosyltransferase 28 family. MurG subfamily.

It is found in the cell membrane. The enzyme catalyses Mur2Ac(oyl-L-Ala-gamma-D-Glu-L-Lys-D-Ala-D-Ala)-di-trans,octa-cis-undecaprenyl diphosphate + UDP-N-acetyl-alpha-D-glucosamine = beta-D-GlcNAc-(1-&gt;4)-Mur2Ac(oyl-L-Ala-gamma-D-Glu-L-Lys-D-Ala-D-Ala)-di-trans,octa-cis-undecaprenyl diphosphate + UDP + H(+). It functions in the pathway cell wall biogenesis; peptidoglycan biosynthesis. Functionally, cell wall formation. Catalyzes the transfer of a GlcNAc subunit on undecaprenyl-pyrophosphoryl-MurNAc-pentapeptide (lipid intermediate I) to form undecaprenyl-pyrophosphoryl-MurNAc-(pentapeptide)GlcNAc (lipid intermediate II). The chain is UDP-N-acetylglucosamine--N-acetylmuramyl-(pentapeptide) pyrophosphoryl-undecaprenol N-acetylglucosamine transferase from Streptococcus pyogenes serotype M6 (strain ATCC BAA-946 / MGAS10394).